Consider the following 258-residue polypeptide: Terpene cyclase macJ (258 aa).

The next 7 membrane-spanning stretches (helical) occupy residues 29–49 (VPDG…ILMA), 58–78 (YAMP…YGFV), 83–103 (LLNQ…FYAI), 124–144 (IIVV…ATFI), 151–171 (VVFM…IAQL), 181–201 (SWGI…CFFW), and 220–240 (FLLL…VYVQ).

This sequence belongs to the paxB family.

Its subcellular location is the membrane. Its pathway is secondary metabolite biosynthesis; terpenoid biosynthesis. In terms of biological role, terpene cyclase; part of the gene cluster that mediates the biosynthesis of macrophorins, isoprenoid epoxycyclohexenones containing cyclized drimane moieties. The first step of the pathway is the synthesis of 6-methylsalicylic acid (6-MSA) by the polyketide synthase macA. 6-MSA is then converted to m-cresol by the decarboxylase macB. The cytochrome P450 monooxygenase macC then catalyzes the oxidation of m-cresol to toluquinol. Epoxidation of toluquinol is then performed by the short chain dehydrogenase macD, with the help of macE, and a further prenylation by macG leads to 7-deacetoxyyanuthone A. The next step is the hydroxylation of C-22 of 7-deacetoxyyanuthone A by the cytochrome P450 monooxygenase macH to yield 22-deacetylyanuthone A. O-Mevalon transferase macI then attaches mevalon to the hydroxyl group of 22-deacetylyanuthone A to produce yanuthone E. The terpene cyclase macJ catalyzes the cyclization of 22-deacetylyanuthone A to macrophorin A. MacJ is also able to catalyze cyclization of yanuthone E and 7-deacetoxyyanuthone A to their corresponding macrophorins. The macJ products can be further modified by macH and macJ, as well as by the FAD-dependent monooxygenase macF, to produce additional macrophorins, including 4'-oxomacrophorin A, 4'-oxomacrophorin D and 4'-oxomacrophorin E. The polypeptide is Terpene cyclase macJ (Penicillium terrestre).